Consider the following 230-residue polypeptide: Cytidylate kinase (230 aa).

12-20 (GPSGAGKGT) serves as a coordination point for ATP.

The protein belongs to the cytidylate kinase family. Type 1 subfamily.

It is found in the cytoplasm. The enzyme catalyses CMP + ATP = CDP + ADP. It catalyses the reaction dCMP + ATP = dCDP + ADP. This Shewanella piezotolerans (strain WP3 / JCM 13877) protein is Cytidylate kinase.